The following is a 108-amino-acid chain: UPF0060 membrane protein Mfla_0485 (108 aa).

Transmembrane regions (helical) follow at residues F7–W27, S33–L53, A63–I83, and T87–P107.

The protein belongs to the UPF0060 family.

The protein resides in the cell inner membrane. This is UPF0060 membrane protein Mfla_0485 from Methylobacillus flagellatus (strain ATCC 51484 / DSM 6875 / VKM B-1610 / KT).